Here is a 625-residue protein sequence, read N- to C-terminus: Chaperone protein HtpG (625 aa).

Positions 1 to 339 (MNKQTLSFQA…SSDLPLNVSR (339 aa)) are a; substrate-binding. A b region spans residues 340–557 (ELLQESRDVK…DGDISGHLAR (218 aa)). The segment at 558 to 625 (LLKQAGQSAP…YVQRVNRLLV (68 aa)) is c.

Belongs to the heat shock protein 90 family. In terms of assembly, homodimer.

It localises to the cytoplasm. Functionally, molecular chaperone. Has ATPase activity. The polypeptide is Chaperone protein HtpG (Methylibium petroleiphilum (strain ATCC BAA-1232 / LMG 22953 / PM1)).